Reading from the N-terminus, the 1793-residue chain is Chitin synthase 5 (1793 aa).

A disordered region spans residues 1–28 (MTNPRMSMYSLASEAPGGNRGTGQQSTQ). Residues Asn-70, Asn-164, Asn-638, Asn-664, and Asn-669 are each glycosylated (N-linked (GlcNAc...) asparagine). Transmembrane regions (helical) follow at residues 750–770 (VWVF…LRYV) and 786–806 (LVLC…IVAF). A Cytochrome b5 heme-binding domain is found at 815–877 (DKAYSQKEVD…GMNLDDYFVA (63 aa)). Residues Asn-897, Asn-1019, and Asn-1023 are each glycosylated (N-linked (GlcNAc...) asparagine). The helical transmembrane segment at 1056 to 1076 (LLLAFSIMLCAVILLKFVSAL) threads the bilayer. The N-linked (GlcNAc...) asparagine glycan is linked to Asn-1421. The next 3 helical transmembrane spans lie at 1452-1472 (LFGT…IYLV), 1479-1499 (FPLI…LIFI), and 1507-1527 (IGWM…LPIY). N-linked (GlcNAc...) asparagine glycans are attached at residues Asn-1534 and Asn-1705. The region spanning 1735 to 1791 (GPDDGMIVEAIRTVLMEVDLDTVTKKQVRALVEQRLQSELVGERRTFMDRQIDHELA) is the DEK-C domain.

It belongs to the chitin synthase family. Class V subfamily.

Its subcellular location is the cell membrane. It carries out the reaction [(1-&gt;4)-N-acetyl-beta-D-glucosaminyl](n) + UDP-N-acetyl-alpha-D-glucosamine = [(1-&gt;4)-N-acetyl-beta-D-glucosaminyl](n+1) + UDP + H(+). Polymerizes chitin, a structural polymer of the cell wall and septum, by transferring the sugar moiety of UDP-GlcNAc to the non-reducing end of the growing chitin polymer. Regulates Germination and Tolerance to Hyperosmotic Stress. Plays a key role in pathogenicity. Likely contributes to post-penetration virulence. The sequence is that of Chitin synthase 5 from Verticillium dahliae (strain VdLs.17 / ATCC MYA-4575 / FGSC 10137) (Verticillium wilt).